Reading from the N-terminus, the 177-residue chain is Nucleoside triphosphate/diphosphate phosphatase (177 aa).

The Proton donor role is filled by Arg-23. Residues Asn-87, Asp-103, Asp-105, Asp-107, Asp-120, and Glu-123 each coordinate Mg(2+).

Belongs to the Ntdp family. Mg(2+) serves as cofactor.

The enzyme catalyses a ribonucleoside 5'-triphosphate + H2O = a ribonucleoside 5'-diphosphate + phosphate + H(+). It catalyses the reaction a ribonucleoside 5'-diphosphate + H2O = a ribonucleoside 5'-phosphate + phosphate + H(+). Has nucleoside phosphatase activity towards nucleoside triphosphates and nucleoside diphosphates. The sequence is that of Nucleoside triphosphate/diphosphate phosphatase from Streptococcus agalactiae serotype Ia (strain ATCC 27591 / A909 / CDC SS700).